Here is a 722-residue protein sequence, read N- to C-terminus: Glycine--tRNA ligase beta subunit (722 aa).

Belongs to the class-II aminoacyl-tRNA synthetase family. Tetramer of two alpha and two beta subunits.

It localises to the cytoplasm. The enzyme catalyses tRNA(Gly) + glycine + ATP = glycyl-tRNA(Gly) + AMP + diphosphate. This chain is Glycine--tRNA ligase beta subunit (glyS), found in Xylella fastidiosa (strain 9a5c).